We begin with the raw amino-acid sequence, 339 residues long: Dihydroorotate dehydrogenase (quinone) (339 aa).

FMN-binding positions include 62 to 66 (AGLDK) and T86. A substrate-binding site is contributed by K66. 111-115 (NRMGF) is a binding site for substrate. N139 and N172 together coordinate FMN. Residue N172 coordinates substrate. The active-site Nucleophile is S175. Residue N177 coordinates substrate. Residues K217 and T245 each contribute to the FMN site. 246 to 247 (NT) is a substrate binding site. Residues G268, G297, and 318 to 319 (YS) contribute to the FMN site.

It belongs to the dihydroorotate dehydrogenase family. Type 2 subfamily. In terms of assembly, monomer. Requires FMN as cofactor.

Its subcellular location is the cell membrane. The enzyme catalyses (S)-dihydroorotate + a quinone = orotate + a quinol. Its pathway is pyrimidine metabolism; UMP biosynthesis via de novo pathway; orotate from (S)-dihydroorotate (quinone route): step 1/1. Functionally, catalyzes the conversion of dihydroorotate to orotate with quinone as electron acceptor. The polypeptide is Dihydroorotate dehydrogenase (quinone) (Shewanella denitrificans (strain OS217 / ATCC BAA-1090 / DSM 15013)).